Here is a 203-residue protein sequence, read N- to C-terminus: Endo-type membrane-bound lytic murein transglycosylase A (203 aa).

The signal sequence occupies residues methionine 1–glycine 15. Residue cysteine 16 is the site of N-palmitoyl cysteine attachment. Cysteine 16 carries S-diacylglycerol cysteine lipidation.

Belongs to the transglycosylase Slt family.

It localises to the cell outer membrane. It carries out the reaction Endolytic cleavage of the (1-&gt;4)-beta-glycosidic linkage between N-acetylmuramic acid (MurNAc) and N-acetylglucosamine (GlcNAc) residues in peptidoglycan with concomitant formation of a 1,6-anhydrobond in the MurNAc residue.. In terms of biological role, murein-degrading enzyme. May play a role in recycling of muropeptides during cell elongation and/or cell division. Preferentially cleaves at a distance of more than two disaccharide units from the ends of the glycan chain. The polypeptide is Endo-type membrane-bound lytic murein transglycosylase A (Shigella dysenteriae serotype 1 (strain Sd197)).